We begin with the raw amino-acid sequence, 166 residues long: Small ribosomal subunit protein uS5 (166 aa).

The S5 DRBM domain maps to 11–74 (LQEKLIAVNR…EKARRNMMNV (64 aa)).

This sequence belongs to the universal ribosomal protein uS5 family. As to quaternary structure, part of the 30S ribosomal subunit. Contacts proteins S4 and S8.

In terms of biological role, with S4 and S12 plays an important role in translational accuracy. Located at the back of the 30S subunit body where it stabilizes the conformation of the head with respect to the body. This chain is Small ribosomal subunit protein uS5, found in Pectobacterium atrosepticum (strain SCRI 1043 / ATCC BAA-672) (Erwinia carotovora subsp. atroseptica).